The primary structure comprises 591 residues: Serine/threonine-protein kinase Nek2 (591 aa).

Positions 4 to 258 (YEVLEQIGKG…AAQLLKHPQL (255 aa)) constitute a Protein kinase domain. ATP contacts are provided by residues 10–18 (IGKGAFGSA) and lysine 33. Aspartate 129 (proton acceptor) is an active-site residue. Disordered regions lie at residues 309–331 (LGNE…SSTR), 382–408 (ARNQ…TTPN), and 500–534 (RTDG…DTSS). 2 stretches are compositionally biased toward polar residues: residues 391–408 (TSYN…TTPN) and 504–534 (DNGS…DTSS).

This sequence belongs to the protein kinase superfamily. NEK Ser/Thr protein kinase family. NIMA subfamily. As to expression, expressed in anthers, pistils and leaves.

It catalyses the reaction L-seryl-[protein] + ATP = O-phospho-L-seryl-[protein] + ADP + H(+). The catalysed reaction is L-threonyl-[protein] + ATP = O-phospho-L-threonyl-[protein] + ADP + H(+). Its function is as follows. May be involved in plant development processes. In Oryza sativa subsp. japonica (Rice), this protein is Serine/threonine-protein kinase Nek2.